We begin with the raw amino-acid sequence, 308 residues long: Ribosomal RNA small subunit methyltransferase H (308 aa).

S-adenosyl-L-methionine is bound by residues 38–40 (GGH), Asp-58, Phe-82, Asp-99, and Gln-106.

The protein belongs to the methyltransferase superfamily. RsmH family.

The protein resides in the cytoplasm. It catalyses the reaction cytidine(1402) in 16S rRNA + S-adenosyl-L-methionine = N(4)-methylcytidine(1402) in 16S rRNA + S-adenosyl-L-homocysteine + H(+). Functionally, specifically methylates the N4 position of cytidine in position 1402 (C1402) of 16S rRNA. In Acidovorax ebreus (strain TPSY) (Diaphorobacter sp. (strain TPSY)), this protein is Ribosomal RNA small subunit methyltransferase H.